The primary structure comprises 88 residues: Small cysteine-rich outer membrane protein OmcA (88 aa).

Positions 1 to 18 (MKKTALLAALCSVVSLSS) are cleaved as a signal peptide. C19 is lipidated: N-palmitoyl cysteine. C19 carries S-diacylglycerol cysteine lipidation.

In terms of assembly, part of a disulfide cross-linked outer membrane complex (COMC) composed of the major outer membrane porin (MOMP), the small cysteine-rich protein (OmcA) and the large cysteine-rich periplasmic protein (OmcB).

It localises to the cell outer membrane. In elementary bodies (EBs, the infectious stage, which is able to survive outside the host cell) provides the structural integrity of the outer envelope through disulfide cross-links with the large cysteine-rich periplasmic protein and the major outer membrane porin. It has been described in publications as the Sarkosyl-insoluble COMC (Chlamydia outer membrane complex), and serves as the functional equivalent of peptidoglycan. In Chlamydia muridarum (strain MoPn / Nigg), this protein is Small cysteine-rich outer membrane protein OmcA (omcA).